Consider the following 101-residue polypeptide: Protein Tat (101 aa).

Residues 1-20 form a disordered region; it reads MEPVDPNLEPWKHPGSQPTT. Residues 1–24 are interaction with human CREBBP; the sequence is MEPVDPNLEPWKHPGSQPTTACSN. Residues 1–48 are transactivation; it reads MEPVDPNLEPWKHPGSQPTTACSNCYCKVCCWHCQLCFLKKGLGISYG. Cys22, Cys25, and Cys27 together coordinate Zn(2+). Residues 22–37 are cysteine-rich; sequence CSNCYCKVCCWHCQLC. Lys28 is modified (N6-acetyllysine; by host PCAF). Residues Cys30, His33, Cys34, and Cys37 each coordinate Zn(2+). The interval 38 to 48 is core; the sequence is FLKKGLGISYG. The interval 48 to 101 is disordered; the sequence is GKKKRKPRRGPPQGSKDHQTLIPKQPLPQSQRVSAGQEESKKKVESKAKTDRFA. Residues 49 to 57 carry the Nuclear localization signal, RNA-binding (TAR), and protein transduction motif; that stretch reads KKKRKPRRG. Residues 49–86 form an interaction with the host capping enzyme RNGTT region; the sequence is KKKRKPRRGPPQGSKDHQTLIPKQPLPQSQRVSAGQEE. N6-acetyllysine; by host EP300 and GCN5L2 occurs at positions 50 and 51. Arg52 is modified (asymmetric dimethylarginine; by host PRMT6). A Glycyl lysine isopeptide (Lys-Gly) (interchain with G-Cter in ubiquitin) cross-link involves residue Lys71. A compositionally biased stretch (basic and acidic residues) spans 85-101; it reads EESKKKVESKAKTDRFA.

Belongs to the lentiviruses Tat family. As to quaternary structure, interacts with host CCNT1. Associates with the P-TEFb complex composed at least of Tat, P-TEFb (CDK9 and CCNT1), TAR RNA, RNA Pol II. Recruits the HATs CREBBP, TAF1/TFIID, EP300, PCAF and GCN5L2. Interacts with host KAT5/Tip60; this interaction targets the latter to degradation. Interacts with the host deacetylase SIRT1. Interacts with host capping enzyme RNGTT; this interaction stimulates RNGTT. Binds to host KDR, and to the host integrins ITGAV/ITGB3 and ITGA5/ITGB1. Interacts with host KPNB1/importin beta-1 without previous binding to KPNA1/importin alpha-1. Interacts with EIF2AK2. Interacts with host nucleosome assembly protein NAP1L1; this interaction may be required for the transport of Tat within the nucleus, since the two proteins interact at the nuclear rim. Interacts with host C1QBP/SF2P32; this interaction involves lysine-acetylated Tat. Interacts with the host chemokine receptors CCR2, CCR3 and CXCR4. Interacts with host DPP4/CD26; this interaction may trigger an anti-proliferative effect. Interacts with host LDLR. Interacts with the host extracellular matrix metalloproteinase MMP1. Interacts with host PRMT6; this interaction mediates Tat's methylation. Interacts with, and is ubiquitinated by MDM2/Hdm2. Interacts with host PSMC3 and HTATIP2. Interacts with STAB1; this interaction may overcome SATB1-mediated repression of IL2 and IL2RA (interleukin) in T cells by binding to the same domain than HDAC1. Interacts (when acetylated) with human CDK13, thereby increasing HIV-1 mRNA splicing and promoting the production of the doubly spliced HIV-1 protein Nef. Interacts with host TBP; this interaction modulates the activity of transcriptional pre-initiation complex. Interacts with host RELA. Interacts with host PLSCR1; this interaction negatively regulates Tat transactivation activity by altering its subcellular distribution. In terms of processing, asymmetrical arginine methylation by host PRMT6 seems to diminish the transactivation capacity of Tat and affects the interaction with host CCNT1. Acetylation by EP300, CREBBP, GCN5L2/GCN5 and PCAF regulates the transactivation activity of Tat. EP300-mediated acetylation of Lys-50 promotes dissociation of Tat from the TAR RNA through the competitive binding to PCAF's bromodomain. In addition, the non-acetylated Tat's N-terminus can also interact with PCAF. PCAF-mediated acetylation of Lys-28 enhances Tat's binding to CCNT1. Lys-50 is deacetylated by SIRT1. Post-translationally, polyubiquitination by host MDM2 does not target Tat to degradation, but activates its transactivation function and fosters interaction with CCNT1 and TAR RNA. In terms of processing, phosphorylated by EIF2AK2 on serine and threonine residues adjacent to the basic region important for TAR RNA binding and function. Phosphorylation of Tat by EIF2AK2 is dependent on the prior activation of EIF2AK2 by dsRNA.

Its subcellular location is the host nucleus. The protein resides in the host nucleolus. It localises to the host cytoplasm. It is found in the secreted. In terms of biological role, transcriptional activator that increases RNA Pol II processivity, thereby increasing the level of full-length viral transcripts. Recognizes a hairpin structure at the 5'-LTR of the nascent viral mRNAs referred to as the transactivation responsive RNA element (TAR) and recruits the cyclin T1-CDK9 complex (P-TEFb complex) that will in turn hyperphosphorylate the RNA polymerase II to allow efficient elongation. The CDK9 component of P-TEFb and other Tat-activated kinases hyperphosphorylate the C-terminus of RNA Pol II that becomes stabilized and much more processive. Other factors such as HTATSF1/Tat-SF1, SUPT5H/SPT5, and HTATIP2 are also important for Tat's function. Besides its effect on RNA Pol II processivity, Tat induces chromatin remodeling of proviral genes by recruiting the histone acetyltransferases (HATs) CREBBP, EP300 and PCAF to the chromatin. This also contributes to the increase in proviral transcription rate, especially when the provirus integrates in transcriptionally silent region of the host genome. To ensure maximal activation of the LTR, Tat mediates nuclear translocation of NF-kappa-B by interacting with host RELA. Through its interaction with host TBP, Tat may also modulate transcription initiation. Tat can reactivate a latently infected cell by penetrating in it and transactivating its LTR promoter. In the cytoplasm, Tat is thought to act as a translational activator of HIV-1 mRNAs. Extracellular circulating Tat can be endocytosed by surrounding uninfected cells via the binding to several surface receptors such as CD26, CXCR4, heparan sulfate proteoglycans (HSPG) or LDLR. Neurons are rarely infected, but they internalize Tat via their LDLR. Through its interaction with nuclear HATs, Tat is potentially able to control the acetylation-dependent cellular gene expression. Modulates the expression of many cellular genes involved in cell survival, proliferation or in coding for cytokines or cytokine receptors. Tat plays a role in T-cell and neurons apoptosis. Tat induced neurotoxicity and apoptosis probably contribute to neuroAIDS. Circulating Tat also acts as a chemokine-like and/or growth factor-like molecule that binds to specific receptors on the surface of the cells, affecting many cellular pathways. In the vascular system, Tat binds to ITGAV/ITGB3 and ITGA5/ITGB1 integrins dimers at the surface of endothelial cells and competes with bFGF for heparin-binding sites, leading to an excess of soluble bFGF. In Human immunodeficiency virus type 1 group M subtype A (isolate U455) (HIV-1), this protein is Protein Tat.